A 371-amino-acid polypeptide reads, in one-letter code: MPAAAAAAAPPNPNVLQLAPRLRGLVSFPSSYSSSSPFSNRLRLRLPRAASMSAEARVPVAPPAHPTYDLKAVINLALSEDAGDRGDVSCLATIPSDVKAEATFIAKEDGVVAGISLADMIFKQVDPSLKVEWFESDGNYVHKGLQFGRVYGCARNIIVAERVVLNFMQRMSGIATMTKAMADAAHPACILETRKTAPGLRLVDKWAVLIGGGKNHRIGLFDMVMIKDNHISVAGGITNAMKFVDRFLAKEKLALPVEVETRTLQEVKDLLEYAAENNTSLTRIMLDNMVVPLGNGDIDVSMLKDAVELINGRFETEASGNVTIDTVKKIGETGVTYISSGALTHSVKALDISLKIDTELALQVGRRTNRA.

Residues Met1–Arg48 constitute a chloroplast transit peptide. Substrate-binding positions include Arg162, Thr193 to Lys195, Arg217, Lys227, Glu260, Asp287, Ser319 to Asn321, and Ser340 to Ala342.

This sequence belongs to the NadC/ModD family.

Its subcellular location is the plastid. The protein resides in the chloroplast. The enzyme catalyses nicotinate beta-D-ribonucleotide + CO2 + diphosphate = quinolinate + 5-phospho-alpha-D-ribose 1-diphosphate + 2 H(+). It participates in cofactor biosynthesis; NAD(+) biosynthesis; nicotinate D-ribonucleotide from quinolinate: step 1/1. Involved in the catabolism of quinolinic acid (QA). This Oryza sativa subsp. japonica (Rice) protein is Nicotinate-nucleotide pyrophosphorylase [carboxylating], chloroplastic.